The primary structure comprises 131 residues: SPbeta prophage-derived uncharacterized protein YomZ (131 aa).

In Bacillus subtilis (strain 168), this protein is SPbeta prophage-derived uncharacterized protein YomZ (yomZ).